A 225-amino-acid polypeptide reads, in one-letter code: Small ribosomal subunit protein uS3 (225 aa).

The KH type-2 domain occupies 16–85; the sequence is VCEYVVKETE…TPQIEVKDVK (70 aa). A disordered region spans residues 202-225; sequence EVGTESKADQTDVEGRETGNAEES. Residues 205 to 225 are compositionally biased toward basic and acidic residues; it reads TESKADQTDVEGRETGNAEES.

It belongs to the universal ribosomal protein uS3 family. As to quaternary structure, part of the 30S ribosomal subunit.

Functionally, binds the lower part of the 30S subunit head. This Thermoplasma acidophilum (strain ATCC 25905 / DSM 1728 / JCM 9062 / NBRC 15155 / AMRC-C165) protein is Small ribosomal subunit protein uS3.